The chain runs to 398 residues: Elongation factor Tu (398 aa).

The tr-type G domain occupies 10-207 (KIHLNVGTIG…ILDKNIPVPN (198 aa)). Residues 19–26 (GHVDHGKT) are G1. Residue 19-26 (GHVDHGKT) coordinates GTP. Thr26 contacts Mg(2+). Positions 60–64 (GITIS) are G2. Residues 81–84 (DCPG) are G3. GTP-binding positions include 81–85 (DCPGH) and 136–139 (NKAD). The interval 136–139 (NKAD) is G4. The segment at 174–176 (SAL) is G5.

Belongs to the TRAFAC class translation factor GTPase superfamily. Classic translation factor GTPase family. EF-Tu/EF-1A subfamily. As to quaternary structure, monomer.

The protein resides in the cytoplasm. The catalysed reaction is GTP + H2O = GDP + phosphate + H(+). Functionally, GTP hydrolase that promotes the GTP-dependent binding of aminoacyl-tRNA to the A-site of ribosomes during protein biosynthesis. This is Elongation factor Tu from Carsonella ruddii (strain PV).